We begin with the raw amino-acid sequence, 196 residues long: Probable malonic semialdehyde reductase RutE (196 aa).

The protein belongs to the nitroreductase family. HadB/RutE subfamily. FMN serves as cofactor.

The catalysed reaction is 3-hydroxypropanoate + NADP(+) = 3-oxopropanoate + NADPH + H(+). Functionally, may reduce toxic product malonic semialdehyde to 3-hydroxypropionic acid, which is excreted. The protein is Probable malonic semialdehyde reductase RutE of Escherichia coli O157:H7.